We begin with the raw amino-acid sequence, 307 residues long: Myeloid-associated differentiation marker-like protein 2 (307 aa).

2 MARVEL domains span residues 17–154 and 159–303; these read AVTS…ARPG and YMAT…RIRF. 7 helical membrane passes run 53 to 73, 90 to 110, 129 to 149, 163 to 183, 198 to 218, 232 to 252, and 278 to 298; these read FCMA…ACEF, AFAM…PLYF, LAAS…VALT, VSGL…GALV, VAVY…SVMG, IVYT…WPVF, and LVVA…LAYS.

This sequence belongs to the MAL family.

The protein localises to the membrane. This chain is Myeloid-associated differentiation marker-like protein 2 (Myadml2), found in Mus musculus (Mouse).